We begin with the raw amino-acid sequence, 380 residues long: Succinyl-diaminopimelate desuccinylase (380 aa).

Zn(2+) is bound at residue His69. The active site involves Asp71. Asp102 lines the Zn(2+) pocket. Catalysis depends on Glu135, which acts as the Proton acceptor. Zn(2+) is bound by residues Glu136, Glu164, and His353.

This sequence belongs to the peptidase M20A family. DapE subfamily. Homodimer. It depends on Zn(2+) as a cofactor. Co(2+) is required as a cofactor.

The enzyme catalyses N-succinyl-(2S,6S)-2,6-diaminopimelate + H2O = (2S,6S)-2,6-diaminopimelate + succinate. It functions in the pathway amino-acid biosynthesis; L-lysine biosynthesis via DAP pathway; LL-2,6-diaminopimelate from (S)-tetrahydrodipicolinate (succinylase route): step 3/3. Functionally, catalyzes the hydrolysis of N-succinyl-L,L-diaminopimelic acid (SDAP), forming succinate and LL-2,6-diaminopimelate (DAP), an intermediate involved in the bacterial biosynthesis of lysine and meso-diaminopimelic acid, an essential component of bacterial cell walls. The sequence is that of Succinyl-diaminopimelate desuccinylase from Cereibacter sphaeroides (strain KD131 / KCTC 12085) (Rhodobacter sphaeroides).